An 834-amino-acid chain; its full sequence is Pentatricopeptide repeat-containing protein At4g39530 (834 aa).

19 PPR repeats span residues 78–112 (DTYL…NLVS), 113–144 (WSTM…KDSP), 145–181 (NEYI…GFDR), 182–212 (DVYV…LPEK), 213–247 (STVT…NVVP), 248–282 (DGYI…GLEM), 283–313 (DASL…MPNK), 314–348 (NIIS…GLKP), 349–383 (DMYA…NLGN), 384–414 (DSYV…FAAA), 415–452 (DVVL…LIRP), 453–487 (SLLT…GLNL), 488–518 (DIFA…MKVK), 519–553 (DLVI…RERP), 554–588 (DEFT…GLEC), 589–619 (NPYI…AASR), 620–654 (DVVC…GIEP), 655–689 (NYIT…GIEP), and 690–720 (ETEH…MPTK). The type E motif stretch occupies residues 725–800 (VWRSLLSGCA…EPGRSWIGIN (76 aa)). The type E(+) motif stretch occupies residues 801–831 (KEVHIFLSKDKSHCKANQIYEVLDDLLVQIR).

The protein belongs to the PPR family. PCMP-E subfamily.

This Arabidopsis thaliana (Mouse-ear cress) protein is Pentatricopeptide repeat-containing protein At4g39530 (PCMP-E52).